The chain runs to 488 residues: Probable malate:quinone oxidoreductase (488 aa).

The protein belongs to the MQO family. Requires FAD as cofactor.

It carries out the reaction (S)-malate + a quinone = a quinol + oxaloacetate. It functions in the pathway carbohydrate metabolism; tricarboxylic acid cycle; oxaloacetate from (S)-malate (quinone route): step 1/1. The polypeptide is Probable malate:quinone oxidoreductase (Neisseria meningitidis serogroup C (strain 053442)).